We begin with the raw amino-acid sequence, 663 residues long: Oligopeptide-binding protein SarA (663 aa).

The signal sequence occupies residues 1 to 22; that stretch reads MKKGKILALAGVALLATGVLAA. C23 carries the N-palmitoyl cysteine lipid modification. The S-diacylglycerol cysteine moiety is linked to residue C23. Residues 637 to 663 are disordered; it reads QKAQEKWNKERAESNKKAQEELEKHVK.

Belongs to the bacterial solute-binding protein 5 family.

The protein resides in the cell membrane. Functionally, may be involved in the expression of cell surface properties important for colonization of the human oral cavity. It may also be involved in uptake processes. This chain is Oligopeptide-binding protein SarA (sarA), found in Streptococcus gordonii (strain Challis / ATCC 35105 / BCRC 15272 / CH1 / DL1 / V288).